Reading from the N-terminus, the 608-residue chain is Bifunctional lycopene cyclase/phytoene synthase (608 aa).

A lycopene beta-cyclase region spans residues 1–240 (MSILTYLEFH…LVFATCAIDR (240 aa)). A run of 7 helical transmembrane segments spans residues 3-23 (ILTY…ALCW), 37-56 (YKFL…NYIV), 80-97 (YMFF…SNFV), 117-137 (LLVR…AWHL), 150-170 (ILWY…EYIL), 175-195 (AVLL…IVAI), and 218-238 (VEEC…TCAI). The segment at 247–608 (LYKSSVQNQN…ARKIKSFFVD (362 aa)) is phytoene synthase.

The protein in the N-terminal section; belongs to the lycopene beta-cyclase family. This sequence in the C-terminal section; belongs to the phytoene/squalene synthase family.

It localises to the membrane. It catalyses the reaction all-trans-lycopene = gamma-carotene. The catalysed reaction is gamma-carotene = all-trans-beta-carotene. It carries out the reaction 2 (2E,6E,10E)-geranylgeranyl diphosphate = 15-cis-phytoene + 2 diphosphate. Its pathway is carotenoid biosynthesis; beta-carotene biosynthesis. It participates in carotenoid biosynthesis; phytoene biosynthesis; all-trans-phytoene from geranylgeranyl diphosphate: step 1/1. Functionally, bifunctional enzyme that catalyzes the reactions from geranylgeranyl diphosphate to phytoene (phytoene synthase) and lycopene to beta-carotene via the intermediate gamma-carotene (lycopene cyclase). The protein is Bifunctional lycopene cyclase/phytoene synthase of Blakeslea trispora (Choanephora trispora).